Reading from the N-terminus, the 766-residue chain is Nucleolar complex protein 2 (766 aa).

The span at 1 to 12 (MKLATKKIKTLG) shows a compositional bias: basic residues. Disordered stretches follow at residues 1-73 (MKLA…EELE), 100-154 (DTDD…DEED), and 674-766 (KTGV…LNEW). Over residues 14–29 (SKPDLSKKKPAKDAIR) the composition is skewed to basic and acidic residues. Residues 33–42 (PQTTSETKVT) show a composition bias toward polar residues. The segment covering 58 to 67 (KTTKKGFKKS) has biased composition (basic residues). The segment covering 100–115 (DTDDDDDEEGDEEDKE) has biased composition (acidic residues). Threonine 101 carries the post-translational modification Phosphothreonine. The span at 130–140 (EKYHKPSKDLE) shows a compositional bias: basic and acidic residues. Residues 141 to 154 (VASDESDFEVDEED) show a composition bias toward acidic residues. A phosphoserine mark is found at serine 143, serine 146, serine 691, serine 693, and serine 705. Acidic residues predominate over residues 706-720 (DDDDDEDVQEEEEVE). Over residues 757–766 (IVKDLDLNEW) the composition is skewed to basic and acidic residues.

Belongs to the NOC2 family.

Its subcellular location is the nucleus. The chain is Nucleolar complex protein 2 from Drosophila melanogaster (Fruit fly).